Consider the following 782-residue polypeptide: MRQKTLDVLEFEKIKSFVADETISDLGREKVQEMAPASNFDTVEFQMNETDEISQIYNKHRLPSLSGLAKVSPLVHRASIGGVLNVGELNRIKRLVQVQNQFKTFYNQMLEEDEEVKYPILHDKMNHLPILTDLFKEINEKCDAHDLFDHASYTLQSIRSKISRTNQRIRQNLDRIVKNQGNQKKLSDAIVTVRNDRNVIPVKAEYRQDFNGIVHDQSASGQTLYIEPNSVVEMNNQISRLRNDEAVERERILTELTGLVSAESDALLVAESVMGQIDFLIAKARYARTIKGTKPTFKEERTIYLPNAFHPLLDKDTVVANTIEFIDDVETVIITGPNTGGKTVTLKTLGLIIVMAQSGLLIPTLDGSQLSIFENVYCDIGDEQSIEQSLSTFSSHMKNIVEILQDADQNSLILFDELGAGTDPSEGAALAMSILDYVRRLGSLVMATTHYPELKAYSYNREGVMNASVEFDVDTLSPTYKLLMGVPGRSNAFDISKKLGLSLNIINKAKTMIGTDEQEINAMIESLEHNSKRVDQQRIELDRLVREAQETHDALSKQYQQYQNYEKSLMEEAKEKANQRVKSATKEADEILKELRNLRDHKGAEVKEHELIDKKKQLDDQYEAKSIKQHVQKKKYDTIHAGDEVKVLSYGQKGEVLELVGNEEAVVQMGIIKMKLPIEDLEKTKKKKEKPTKMVTRQNRQTIKTELDLRGYRYEEALNELDQYLDQAVLSNYEQVYIIHGKGTGALQKGVQQHLKKHKSVRQFRGGMPNEGGFGVTVAELK.

Residue 336–343 coordinates ATP; sequence GPNTGGKT. The Smr domain maps to 707 to 782; it reads LDLRGYRYEE…GFGVTVAELK (76 aa).

It belongs to the DNA mismatch repair MutS family. MutS2 subfamily. In terms of assembly, homodimer. Binds to stalled ribosomes, contacting rRNA.

Functionally, endonuclease that is involved in the suppression of homologous recombination and thus may have a key role in the control of bacterial genetic diversity. Its function is as follows. Acts as a ribosome collision sensor, splitting the ribosome into its 2 subunits. Detects stalled/collided 70S ribosomes which it binds and splits by an ATP-hydrolysis driven conformational change. Acts upstream of the ribosome quality control system (RQC), a ribosome-associated complex that mediates the extraction of incompletely synthesized nascent chains from stalled ribosomes and their subsequent degradation. Probably generates substrates for RQC. This chain is Endonuclease MutS2, found in Staphylococcus epidermidis (strain ATCC 12228 / FDA PCI 1200).